The following is a 277-amino-acid chain: Caspase-3 (277 aa).

M1 is subject to N-acetylmethionine. 2 propeptides span residues 1 to 9 (MENTENSVD) and 10 to 28 (SKSIKNLEPKIIHGSESMD). The residue at position 11 (K11) is an N6-acetyllysine. S26 carries the post-translational modification Phosphoserine. Active-site residues include H121 and C163. The residue at position 163 (C163) is an S-nitrosocysteine; in inhibited form. Position 207 is a (Microbial infection) ADP-riboxanated arginine (R207).

It belongs to the peptidase C14A family. In terms of assembly, heterotetramer that consists of two anti-parallel arranged heterodimers, each one formed by a 17 kDa (p17) and a 12 kDa (p12) subunit. Interacts with BIRC6/bruce. Cleavage by granzyme B, caspase-6, caspase-8 and caspase-10 generates the two active subunits. Additional processing of the propeptides is likely due to the autocatalytic activity of the activated protease. Active heterodimers between the small subunit of caspase-7 protease and the large subunit of caspase-3 also occur and vice versa. In terms of processing, S-nitrosylated on its catalytic site cysteine in unstimulated human cell lines and denitrosylated upon activation of the Fas apoptotic pathway, associated with an increase in intracellular caspase activity. Fas therefore activates caspase-3 not only by inducing the cleavage of the caspase zymogen to its active subunits, but also by stimulating the denitrosylation of its active site thiol. Post-translationally, ubiquitinated by BIRC6; this activity is inhibited by DIABLO/SMAC. (Microbial infection) ADP-riboxanation by C.violaceum CopC blocks CASP3 processing, preventing CASP3 activation and ability to recognize and cleave substrates. Highly expressed in lung, spleen, heart, liver and kidney. Moderate levels in brain and skeletal muscle, and low in testis. Also found in many cell lines, highest expression in cells of the immune system.

The protein resides in the cytoplasm. The enzyme catalyses Strict requirement for an Asp residue at positions P1 and P4. It has a preferred cleavage sequence of Asp-Xaa-Xaa-Asp-|- with a hydrophobic amino-acid residue at P2 and a hydrophilic amino-acid residue at P3, although Val or Ala are also accepted at this position.. Inhibited by isatin sulfonamides. Inhibited by BIRC6; following inhibition of BIRC6-caspase binding by DIABLO/SMAC, BIRC6 is subjected to caspase cleavage, leading to an increase in active caspases. Its function is as follows. Thiol protease that acts as a major effector caspase involved in the execution phase of apoptosis. Following cleavage and activation by initiator caspases (CASP8, CASP9 and/or CASP10), mediates execution of apoptosis by catalyzing cleavage of many proteins. At the onset of apoptosis, it proteolytically cleaves poly(ADP-ribose) polymerase PARP1 at a '216-Asp-|-Gly-217' bond. Cleaves and activates sterol regulatory element binding proteins (SREBPs) between the basic helix-loop-helix leucine zipper domain and the membrane attachment domain. Cleaves and activates caspase-6, -7 and -9 (CASP6, CASP7 and CASP9, respectively). Cleaves and inactivates interleukin-18 (IL18). Involved in the cleavage of huntingtin. Triggers cell adhesion in sympathetic neurons through RET cleavage. Cleaves and inhibits serine/threonine-protein kinase AKT1 in response to oxidative stress. Acts as an inhibitor of type I interferon production during virus-induced apoptosis by mediating cleavage of antiviral proteins CGAS, IRF3 and MAVS, thereby preventing cytokine overproduction. Also involved in pyroptosis by mediating cleavage and activation of gasdermin-E (GSDME). Cleaves XRCC4 and phospholipid scramblase proteins XKR4, XKR8 and XKR9, leading to promote phosphatidylserine exposure on apoptotic cell surface. Cleaves BIRC6 following inhibition of BIRC6-caspase binding by DIABLO/SMAC. The protein is Caspase-3 (CASP3) of Homo sapiens (Human).